The primary structure comprises 255 residues: 3-dehydroquinate dehydratase (255 aa).

3-dehydroquinate-binding positions include 47 to 49 (EWR) and R83. H144 functions as the Proton donor/acceptor in the catalytic mechanism. The Schiff-base intermediate with substrate role is filled by K171. 3-dehydroquinate-binding residues include R214, S233, and Q237.

Belongs to the type-I 3-dehydroquinase family. In terms of assembly, homodimer or homotetramer.

The catalysed reaction is 3-dehydroquinate = 3-dehydroshikimate + H2O. It participates in metabolic intermediate biosynthesis; chorismate biosynthesis; chorismate from D-erythrose 4-phosphate and phosphoenolpyruvate: step 3/7. Functionally, involved in the third step of the chorismate pathway, which leads to the biosynthesis of aromatic amino acids. Catalyzes the cis-dehydration of 3-dehydroquinate (DHQ) and introduces the first double bond of the aromatic ring to yield 3-dehydroshikimate. The reaction involves the formation of an imine intermediate between the keto group of 3-dehydroquinate and the epsilon-amino group of Lys-170 at the active site. This Clostridioides difficile (strain 630) (Peptoclostridium difficile) protein is 3-dehydroquinate dehydratase.